Reading from the N-terminus, the 596-residue chain is Deuterosome assembly protein 1 (596 aa).

Coiled-coil stretches lie at residues 8–68 (IARN…NHEI), 130–180 (CELQ…FQKE), and 227–284 (IENL…DLLR). Positions 297–306 (TANLANQKTA) are enriched in polar residues. The segment at 297 to 316 (TANLANQKTAQGEEASFQVT) is disordered. Positions 337-402 (SEKYQAENDL…LKGAQNRQTS (66 aa)) form a coiled coil. The disordered stretch occupies residues 447-467 (DKPQKHRSFHGENNSLKPTNY). Residues 457 to 467 (GENNSLKPTNY) are compositionally biased toward polar residues.

The protein belongs to the CEP63 family.

It is found in the cytoplasm. Its function is as follows. Key structural component of the deuterosome, a structure that promotes de novo centriole amplification in multiciliated cells. Deuterosome-mediated centriole amplification occurs in terminally differentiated multiciliated cells and can generate more than 100 centrioles. Probably sufficient for the specification and formation of the deuterosome inner core. In Xenopus tropicalis (Western clawed frog), this protein is Deuterosome assembly protein 1.